Reading from the N-terminus, the 242-residue chain is MIKIGIYGAKGRMGKQIEECLKSETQARISILYDKGGNLGELFEKSDVIIDFSSPSGTHELLNYARTMPKPLVIGTTGLDEKILHLMQSASEVMPIFYATNMSLGVAVLNYLASKASQMLRNFDIEILEMHHRHKKDAPSGTAMTLAQSVAKARNLELEKVRVSGRDGIIGERSKDEIAVMSLRGGDIVGRHTVGFYEDGEFLELNHTATSRATFAKGAIKIAIWLSKQEAKMYSINDFLGI.

NAD(+)-binding positions include 8-13, 75-77, and 99-102; these read GAKGRM, GTT, and ATNM. The Proton donor/acceptor role is filled by His-131. A (S)-2,3,4,5-tetrahydrodipicolinate-binding site is contributed by His-132. Lys-135 acts as the Proton donor in catalysis. Residue 141-142 participates in (S)-2,3,4,5-tetrahydrodipicolinate binding; the sequence is GT.

Belongs to the DapB family.

The protein localises to the cytoplasm. The catalysed reaction is (S)-2,3,4,5-tetrahydrodipicolinate + NAD(+) + H2O = (2S,4S)-4-hydroxy-2,3,4,5-tetrahydrodipicolinate + NADH + H(+). The enzyme catalyses (S)-2,3,4,5-tetrahydrodipicolinate + NADP(+) + H2O = (2S,4S)-4-hydroxy-2,3,4,5-tetrahydrodipicolinate + NADPH + H(+). It participates in amino-acid biosynthesis; L-lysine biosynthesis via DAP pathway; (S)-tetrahydrodipicolinate from L-aspartate: step 4/4. Catalyzes the conversion of 4-hydroxy-tetrahydrodipicolinate (HTPA) to tetrahydrodipicolinate. The protein is 4-hydroxy-tetrahydrodipicolinate reductase of Campylobacter jejuni subsp. jejuni serotype O:2 (strain ATCC 700819 / NCTC 11168).